The following is a 215-amino-acid chain: Cytochrome b6 (215 aa).

The chain crosses the membrane as a helical span at residues 32–52 (IFYCLGGVTLICFLVQFATGF). Cys-35 provides a ligand contact to heme c. Heme b-binding residues include His-86 and His-100. The next 3 membrane-spanning stretches (helical) occupy residues 90–110 (ASMM…TGGF), 116–136 (LTWV…VTGY), and 186–206 (AHTF…FLMI). Heme b is bound by residues His-187 and His-202.

The protein belongs to the cytochrome b family. PetB subfamily. As to quaternary structure, the 4 large subunits of the cytochrome b6-f complex are cytochrome b6, subunit IV (17 kDa polypeptide, PetD), cytochrome f and the Rieske protein, while the 4 small subunits are PetG, PetL, PetM and PetN. The complex functions as a dimer. It depends on heme b as a cofactor. The cofactor is heme c.

Its subcellular location is the cell inner membrane. Functionally, component of the cytochrome b6-f complex, which mediates electron transfer between photosystem II (PSII) and photosystem I (PSI), cyclic electron flow around PSI, and state transitions. The sequence is that of Cytochrome b6 from Gloeobacter violaceus (strain ATCC 29082 / PCC 7421).